A 535-amino-acid chain; its full sequence is CTP synthase (535 aa).

The amidoligase domain stretch occupies residues 1–268; it reads MSTKYIFVTG…DQIVCDHLKL (268 aa). Position 14 (Ser14) interacts with CTP. Ser14 is a UTP binding site. ATP is bound at residue 15-20; the sequence is SMGKGI. Position 55 (Tyr55) interacts with L-glutamine. Asp72 contacts ATP. Mg(2+) contacts are provided by Asp72 and Glu142. Residues 149–151, 189–194, and Lys225 contribute to the CTP site; these read DME and KTKIAQ. UTP is bound by residues 189 to 194 and Lys225; that span reads KTKIAQ. Val243 serves as a coordination point for ATP. A Glutamine amidotransferase type-1 domain is found at 293–535; it reads KIALVGKYVE…FIRVAVENSK (243 aa). Gly355 serves as a coordination point for L-glutamine. Cys382 serves as the catalytic Nucleophile; for glutamine hydrolysis. L-glutamine is bound by residues 383-386, Glu406, and Arg464; that span reads LGMQ. Catalysis depends on residues His509 and Glu511.

This sequence belongs to the CTP synthase family. In terms of assembly, homotetramer. In contrast to E.coli CTP synthase, remains a tetramer at dilute enzyme concentrations even in the absence of Mg(2+), ATP and UTP.

It carries out the reaction UTP + L-glutamine + ATP + H2O = CTP + L-glutamate + ADP + phosphate + 2 H(+). It catalyses the reaction L-glutamine + H2O = L-glutamate + NH4(+). The enzyme catalyses UTP + NH4(+) + ATP = CTP + ADP + phosphate + 2 H(+). It functions in the pathway pyrimidine metabolism; CTP biosynthesis via de novo pathway; CTP from UDP: step 2/2. With respect to regulation, allosterically activated by GTP, when glutamine is the substrate. GTP has no effect on the reaction when ammonia is the substrate. The allosteric effector GTP functions by stabilizing the protein conformation that binds the tetrahedral intermediate(s) formed during glutamine hydrolysis. Also activated by magnesium. Allosterically inhibited by CTP. Catalyzes the ATP-dependent amination of UTP to CTP with either L-glutamine or ammonia as the source of nitrogen. Is essential for the synthesis of CTP de novo. Contrary to other bacterial CTP synthases, the lactococcal enzyme is also able to convert dUTP to dCTP, but this reaction may not play a significant physiological role. Regulates intracellular CTP levels through interactions with the four ribonucleotide triphosphates. This chain is CTP synthase, found in Lactococcus lactis subsp. cremoris (strain MG1363).